Consider the following 328-residue polypeptide: GTPase Obg 2 (328 aa).

The Obg domain occupies 1 to 139; it reads MSFRREKFIE…HCVLLKLKIV (139 aa). The OBG-type G domain occupies 140–309; sequence SDVGIIGMPN…LHAQVKKAVV (170 aa). GTP-binding positions include 146–153, 171–175, 192–195, 259–262, and 290–292; these read GMPNAGKS, FTTLE, DIPG, NKCD, and GDE. Mg(2+) is bound by residues serine 153 and threonine 173.

The protein belongs to the TRAFAC class OBG-HflX-like GTPase superfamily. OBG GTPase family. Monomer. It depends on Mg(2+) as a cofactor.

The protein resides in the cytoplasm. An essential GTPase which binds GTP, GDP and possibly (p)ppGpp with moderate affinity, with high nucleotide exchange rates and a fairly low GTP hydrolysis rate. Plays a role in control of the cell cycle, stress response, ribosome biogenesis and in those bacteria that undergo differentiation, in morphogenesis control. The polypeptide is GTPase Obg 2 (Anaplasma marginale (strain St. Maries)).